The following is a 341-amino-acid chain: Protein RecA, plasmid (341 aa).

80 to 87 (GAESSGKT) contacts ATP.

Belongs to the RecA family.

It localises to the cytoplasm. Functionally, can catalyze the hydrolysis of ATP in the presence of single-stranded DNA, the ATP-dependent uptake of single-stranded DNA by duplex DNA, and the ATP-dependent hybridization of homologous single-stranded DNAs. It interacts with LexA causing its activation and leading to its autocatalytic cleavage. This is Protein RecA, plasmid from Lactococcus lactis subsp. lactis (Streptococcus lactis).